The following is a 320-amino-acid chain: Protein HEXIM1 (320 aa).

The segment at 1-124 is disordered; the sequence is MAEPLLSEFQ…RRRPSKKKRL (124 aa). The span at 9-19 shows a compositional bias: polar residues; it reads FQHQPQTSNCT. Residues 24–47 are compositionally biased toward basic and acidic residues; sequence VHEERNPDRPPGAEERVPEEDSRW. Phosphoserine is present on S98. The segment covering 109 to 124 has biased composition (basic residues); the sequence is VGKKKHRRRPSKKKRL. The interval 111–138 is basic region; mediates nuclear localization and interaction with 7SK snRNA and NR3C1; sequence KKKHRRRPSKKKRLWKPYYTLTWEEKKK. An interaction with P-TEFb region spans residues 163–166; that stretch reads PYNT. The autoinhibitory acidic region; in absence of 7SK snRNA interacts with the basic region preventing interaction with P-TEFb and modulating subcellular localization stretch occupies residues 171 to 211; sequence MDDHDQEEPDLKTGLYPKRAAAKSDDTSDEDFMEEAGEEDG. Positions 174–223 are disordered; it reads HDQEEPDLKTGLYPKRAAAKSDDTSDEDFMEEAGEEDGGSDGMGGDGSEF. The residue at position 194 (S194) is a Phosphoserine. T197 is subject to Phosphothreonine. Residues 197–212 show a composition bias toward acidic residues; sequence TSDEDFMEEAGEEDGG. Residues S198, S213, and S221 each carry the phosphoserine modification. The stretch at 244 to 310 forms a coiled coil; sequence SKQELIKEYL…LTENELHRQQ (67 aa). Residues 247-275 form a mediates interaction with CCNT1 region; it reads ELIKEYLELEKCLSRMEDENNRLRLESQR. Residues 271–316 are required for inhibition of ESR1-dependent transcription; sequence LESQRLDGDDARVRELELELDRLRAENLQLLTENELHRQQERAPLS.

Belongs to the HEXIM family. As to quaternary structure, homooligomer and heterooligomer with HEXIM2; probably dimeric. Core component of the 7SK RNP complex, at least composed of 7SK RNA, LARP7, MEPCE, HEXIM1 (or HEXIM2) and P-TEFb (composed of CDK9 and CCNT1/cyclin-T1). Interacts with the N-CoR complex through NCOR1. Interacts with ESR1 and NR3C1. May interact with NF-kappa-B through RELA. Interacts with CCNT2; mediates formation of a tripartite complex with KPNA2. Part of the HDP-RNP complex composed of at least HEXIM1, PRKDC, XRCC5, XRCC6, paraspeckle proteins (SFPQ, NONO, PSPC1, RBM14, and MATR3) and NEAT1 non-coding RNA.

It localises to the nucleus. The protein resides in the cytoplasm. Transcriptional regulator which functions as a general RNA polymerase II transcription inhibitor. Core component of the 7SK RNP complex: in cooperation with 7SK snRNA sequesters P-TEFb in a large inactive 7SK snRNP complex preventing RNA polymerase II phosphorylation and subsequent transcriptional elongation. May also regulate NF-kappa-B, ESR1, NR3C1 and CIITA-dependent transcriptional activity. Plays a role in the regulation of DNA virus-mediated innate immune response by assembling into the HDP-RNP complex, a complex that serves as a platform for IRF3 phosphorylation and subsequent innate immune response activation through the cGAS-STING pathway. This chain is Protein HEXIM1 (HEXIM1), found in Bos taurus (Bovine).